A 214-amino-acid polypeptide reads, in one-letter code: Endoplasmic reticulum vesicle protein 25 (214 aa).

Positions 1-20 are cleaved as a signal peptide; it reads MRSISTLLFIISTFISLVSA. Over 21-183 the chain is Lumenal; sequence LQLAIPATTN…TNESTNSRVK (163 aa). Residues 33–124 enclose the GOLD domain; it reads PFCIRDFVQE…VREIELDVES (92 aa). Residues 184 to 204 form a helical membrane-spanning segment; the sequence is WFSILVITSLVGLGAWQVQYL. Residues 205–214 are Cytoplasmic-facing; sequence RHYFKVKHII.

The protein belongs to the EMP24/GP25L family.

It is found in the endoplasmic reticulum membrane. Its subcellular location is the golgi apparatus membrane. In terms of biological role, constituent of COPII-coated endoplasmic reticulum-derived transport vesicles. Required for efficient transport of a subset of secretory proteins to the Golgi. Facilitates retrograde transport from the Golgi to the endoplasmic reticulum. The sequence is that of Endoplasmic reticulum vesicle protein 25 (ERV25) from Debaryomyces hansenii (strain ATCC 36239 / CBS 767 / BCRC 21394 / JCM 1990 / NBRC 0083 / IGC 2968) (Yeast).